The following is a 144-amino-acid chain: uncharacterized protein (144 aa).

Residues 23–82 (EELYKKLENNLRKIETSYLDSKHCQDFKRKIEYYKIVPLISETKEIIKVLIQKIETLEIK) are a coiled coil.

This is an uncharacterized protein from Acanthamoeba polyphaga mimivirus (APMV).